We begin with the raw amino-acid sequence, 912 residues long: Nonsense-mediated mRNA decay factor SMG8 (912 aa).

A disordered region spans residues 565–630 (EHSNRTPDAS…GEDEDETLEQ (66 aa)). The segment covering 570-602 (TPDASTHPPMTNENSPHLSGSQKSQDSASNLTF) has biased composition (polar residues). Positions 604-614 (MDEKRDEENKS) are enriched in basic and acidic residues.

It belongs to the SMG8 family.

In terms of biological role, involved in nonsense-mediated decay (NMD) of mRNAs containing premature stop codons. Probable component of kinase complex containing SMG1 and recruited to stalled ribosomes. This is Nonsense-mediated mRNA decay factor SMG8 from Culex quinquefasciatus (Southern house mosquito).